A 185-amino-acid chain; its full sequence is Prorelaxin (185 aa).

The first 24 residues, 1–24, serve as a signal peptide directing secretion; sequence MPRLFLFHLLGVCLLLNQFSRAVA. Intrachain disulfides connect Cys-35-Cys-172, Cys-47-Cys-185, and Cys-171-Cys-176. The propeptide at 56–157 is connecting peptide; sequence SLNQEDAPLK…LRSLGLDTHS (102 aa).

Belongs to the insulin family. In terms of assembly, heterodimer of a B chain and an A chain linked by two disulfide bonds.

The protein resides in the secreted. Its function is as follows. Relaxin is an ovarian hormone that acts with estrogen to produce dilatation of the birth canal in many mammals. May be involved in remodeling of connective tissues during pregnancy, promoting growth of pubic ligaments and ripening of the cervix. The sequence is that of Prorelaxin (RLN) from Macaca mulatta (Rhesus macaque).